Reading from the N-terminus, the 156-residue chain is Small ribosomal subunit protein uS7 (156 aa).

The protein belongs to the universal ribosomal protein uS7 family. As to quaternary structure, part of the 30S ribosomal subunit. Contacts proteins S9 and S11.

Functionally, one of the primary rRNA binding proteins, it binds directly to 16S rRNA where it nucleates assembly of the head domain of the 30S subunit. Is located at the subunit interface close to the decoding center, probably blocks exit of the E-site tRNA. This Aliivibrio fischeri (strain MJ11) (Vibrio fischeri) protein is Small ribosomal subunit protein uS7.